The chain runs to 147 residues: Cilia- and flagella-associated protein 90 (147 aa).

The segment at 1-36 (MEDDEEETTASTLRGKPRPPPVSAQSAFSYIPPRRL) is disordered.

In terms of assembly, microtubule inner protein component of sperm flagellar doublet microtubules.

The protein resides in the cytoplasm. Its subcellular location is the cytoskeleton. It is found in the cilium axoneme. It localises to the flagellum axoneme. Microtubule inner protein (MIP) part of the dynein-decorated doublet microtubules (DMTs) in cilia axoneme, which is required for motile cilia beating. This is Cilia- and flagella-associated protein 90 from Homo sapiens (Human).